A 707-amino-acid chain; its full sequence is NADP(+)-dependent formate dehydrogenase subunit beta (707 aa).

As to quaternary structure, heterotetramer composed of two alpha (FdhA) and two beta (FdhB) subunits.

Its subcellular location is the cytoplasm. It catalyses the reaction formate + NADP(+) = CO2 + NADPH. Its activity is regulated as follows. Activity is very sensitive to oxygen. The activity in growing cells is enhanced when selenite and molybdate are added together to the growth medium. Tungstate replaces and is better than molybdate. Selenite is incorporated into the enzyme. Requires a sulfhydryl compound for activity. Inhibited by cyanide, EDTA, hypophosphite and mercaptoethanol. Sulfite inhibits the activity with NADP but not with methyl viologen as electron acceptor. Its function is as follows. Component of a dehydrogenase that catalyzes the NADP-dependent reduction of CO(2) to formate, the first step in the synthesis of the methyl group of acetate during synthesis of acetate from CO(2). In vitro, can use methyl viologen and benzyl viologen in addition to its natural electron acceptor. The chain is NADP(+)-dependent formate dehydrogenase subunit beta from Moorella thermoacetica (Clostridium thermoaceticum).